A 499-amino-acid polypeptide reads, in one-letter code: Putative sodium-dependent excitatory amino acid transporter glt-4 (499 aa).

Over 1-7 (MAKLSKE) the chain is Cytoplasmic. 3 consecutive transmembrane segments (helical) span residues 8–28 (NLLLLFTVLGVVVGIGLGFSL), 50–70 (FVQMLKMLILPMIMSSIITSL), and 87–107 (IYYTLTTFFAVFLGIVLVSVI). The N-linked (GlcNAc...) asparagine glycan is linked to Asn-165. Transmembrane regions (helical) follow at residues 194–217 (VSDGMNILGLVVFSVALGIVIGVI), 227–254 (FFKSLEACSMKLIGWVIIYSPVGITFLI), and 276–297 (ITVILGLLIHAFVVIPLLCVVL). An intramembrane region (discontinuously helical) is located at residues 303–333 (IKFVGGMAQALLTALATSSSSATLPLSIKCC). 320–322 (SSS) is a binding site for L-aspartate. Residues 343–369 (VTRFVLPLGATINMDGTALYEAVAAIY) form a helical membrane-spanning segment. Na(+)-binding residues include Gly-351, Thr-353, and Asn-355. L-aspartate-binding positions include Thr-359, 400 to 404 (IPQAG), Asp-433, and Asn-440. An intramembrane region (discontinuously helical) is located at residues 383-416 (VVLVSLTATLASIGAAGIPQAGIVTMIMVLIAIG). The helical transmembrane segment at 430–451 (FMLDRLRTTVNVHGDSIATAVI) threads the bilayer. Asn-440 and Asp-444 together coordinate Na(+).

The protein belongs to the dicarboxylate/amino acid:cation symporter (DAACS) (TC 2.A.23) family.

The protein resides in the cell membrane. In terms of biological role, sodium-dependent, high-affinity amino acid transporter that mediates the uptake of L-glutamate and also L-aspartate and D-aspartate. Functions as a symporter that transports one amino acid molecule together with two or three Na(+) ions and one proton, in parallel with the counter-transport of one K(+) ion. Mediates Cl(-) flux that is not coupled to amino acid transport; this avoids the accumulation of negative charges due to aspartate and Na(+) symport. The sequence is that of Putative sodium-dependent excitatory amino acid transporter glt-4 (glt-4) from Caenorhabditis elegans.